Consider the following 206-residue polypeptide: Pyridoxine/pyridoxamine 5'-phosphate oxidase (206 aa).

Residues 53–58 (RMVLLK), 68–69 (YT), Lys-75, and Gln-97 each bind FMN. Position 58 (Lys-58) interacts with substrate. Tyr-115, Arg-119, and Ser-123 together coordinate substrate. FMN is bound by residues 132 to 133 (QS) and Trp-177. 183–185 (RLH) contacts substrate. Arg-187 provides a ligand contact to FMN.

It belongs to the pyridoxamine 5'-phosphate oxidase family. In terms of assembly, homodimer. FMN is required as a cofactor.

It catalyses the reaction pyridoxamine 5'-phosphate + O2 + H2O = pyridoxal 5'-phosphate + H2O2 + NH4(+). The enzyme catalyses pyridoxine 5'-phosphate + O2 = pyridoxal 5'-phosphate + H2O2. It participates in cofactor metabolism; pyridoxal 5'-phosphate salvage; pyridoxal 5'-phosphate from pyridoxamine 5'-phosphate: step 1/1. It functions in the pathway cofactor metabolism; pyridoxal 5'-phosphate salvage; pyridoxal 5'-phosphate from pyridoxine 5'-phosphate: step 1/1. In terms of biological role, catalyzes the oxidation of either pyridoxine 5'-phosphate (PNP) or pyridoxamine 5'-phosphate (PMP) into pyridoxal 5'-phosphate (PLP). This chain is Pyridoxine/pyridoxamine 5'-phosphate oxidase, found in Rhizobium leguminosarum bv. trifolii (strain WSM2304).